The following is a 164-amino-acid chain: Arginine repressor (164 aa).

It belongs to the ArgR family.

It is found in the cytoplasm. The protein operates within amino-acid biosynthesis; L-arginine biosynthesis [regulation]. Its function is as follows. Regulates arginine biosynthesis genes. The sequence is that of Arginine repressor from Mycobacterium avium (strain 104).